The primary structure comprises 359 residues: Methylthioribose-1-phosphate isomerase (359 aa).

Residues 52-54, R90, and Q200 contribute to the substrate site; that span reads RGA. Residue D241 is the Proton donor of the active site. 251–252 lines the substrate pocket; it reads NK.

It belongs to the eIF-2B alpha/beta/delta subunits family. MtnA subfamily.

It catalyses the reaction 5-(methylsulfanyl)-alpha-D-ribose 1-phosphate = 5-(methylsulfanyl)-D-ribulose 1-phosphate. The protein operates within amino-acid biosynthesis; L-methionine biosynthesis via salvage pathway; L-methionine from S-methyl-5-thio-alpha-D-ribose 1-phosphate: step 1/6. Its function is as follows. Catalyzes the interconversion of methylthioribose-1-phosphate (MTR-1-P) into methylthioribulose-1-phosphate (MTRu-1-P). In Sulfurimonas denitrificans (strain ATCC 33889 / DSM 1251) (Thiomicrospira denitrificans (strain ATCC 33889 / DSM 1251)), this protein is Methylthioribose-1-phosphate isomerase.